The chain runs to 438 residues: Adenosylhomocysteinase (438 aa).

The substrate site is built by Thr64, Asp139, and Glu164. 165–167 (TTT) provides a ligand contact to NAD(+). The substrate site is built by Lys194 and Asp198. Residues Asn199, 228 to 233 (GYGDVG), Glu251, Asn286, 307 to 309 (IGH), and Asn352 contribute to the NAD(+) site.

Belongs to the adenosylhomocysteinase family. NAD(+) is required as a cofactor.

Its subcellular location is the cytoplasm. The catalysed reaction is S-adenosyl-L-homocysteine + H2O = L-homocysteine + adenosine. Its pathway is amino-acid biosynthesis; L-homocysteine biosynthesis; L-homocysteine from S-adenosyl-L-homocysteine: step 1/1. Its function is as follows. May play a key role in the regulation of the intracellular concentration of adenosylhomocysteine. This chain is Adenosylhomocysteinase, found in Coxiella burnetii (strain Dugway 5J108-111).